A 274-amino-acid chain; its full sequence is MAPNAPFARSLRLQRLHHHDPDRLFIVPLDHSITDGPLSRAHRLDPLVGELASHHVDGIVLHKGSLRHVDPEWFTRTSLIVHLSASTVHAPDPNAKYLVSSVEESLRMGADAVSVHVNLGSEGERHQIADMAAVAEACDRWNVPLLAMMYPRGPKIDDPRDPALVAHAVQVAVDLGADLVKTLYVGSVAAMAEITAASPVPVVVVGGPRDSDESRILAYVDDALRGGAAGVAMGRNVFQAPDPGAMADKLSDLIHNSGTRGAARAPAGAAAGAA.

The protein belongs to the DeoC/FbaB aldolase family. GriI subfamily. In terms of assembly, homodecamer.

It carries out the reaction 2-amino-4,5-dihydroxy-6-oxo-7-(phosphooxy)heptanoate = L-aspartate 4-semialdehyde + dihydroxyacetone phosphate. Functionally, catalyzes aldol condensation between L-aspartate-4-semialdehyde (ASA) and dihydroxyacetone phosphate (DHAP), to form 2-amino-4,5-dihydroxy-6-oxo-7-(phosphonooxy)heptanoate. This chain is 2-amino-4,5-dihydroxy-6-oxo-7-(phosphonooxy)heptanoate synthase (griI), found in Streptomyces griseus subsp. griseus (strain JCM 4626 / CBS 651.72 / NBRC 13350 / KCC S-0626 / ISP 5235).